The following is a 285-amino-acid chain: 2-dehydro-3-deoxyphosphooctonate aldolase (285 aa).

This sequence belongs to the KdsA family.

It is found in the cytoplasm. It carries out the reaction D-arabinose 5-phosphate + phosphoenolpyruvate + H2O = 3-deoxy-alpha-D-manno-2-octulosonate-8-phosphate + phosphate. The protein operates within carbohydrate biosynthesis; 3-deoxy-D-manno-octulosonate biosynthesis; 3-deoxy-D-manno-octulosonate from D-ribulose 5-phosphate: step 2/3. Its pathway is bacterial outer membrane biogenesis; lipopolysaccharide biosynthesis. This is 2-dehydro-3-deoxyphosphooctonate aldolase from Acidovorax ebreus (strain TPSY) (Diaphorobacter sp. (strain TPSY)).